The following is a 416-amino-acid chain: Cysteate synthase (416 aa).

Lys104 carries the N6-(pyridoxal phosphate)lysine modification. Asn130 contributes to the pyridoxal 5'-phosphate binding site.

The protein belongs to the threonine synthase family. Cysteate synthase subfamily. Homotrimer. Pyridoxal 5'-phosphate serves as cofactor.

It carries out the reaction O-phospho-L-serine + sulfite + H(+) = L-cysteate + phosphate. It functions in the pathway cofactor biosynthesis; coenzyme M biosynthesis. Specifically catalyzes the beta-elimination of phosphate from L-phosphoserine and the beta-addition of sulfite to the dehydroalanine intermediate to produce L-cysteate. This Methanosarcina barkeri (strain Fusaro / DSM 804) protein is Cysteate synthase.